The sequence spans 1099 residues: MCGIIGYIGNDKAPKILLNGLRRLEYRGYDSCGIGVVDNNKLIIKKNVGKVEEVAKKERFLDIDGNIGIGHCLHPDTYVILPDGRMKKISEIDEDEVLSVNFEDLKLYNKKIKKFKHKAPKILYKIKTAFSELITTGEHKLFVVENGKIVEKCVKDLNGSELIGVVRKLNYSFNDNVEFKDVYVERHYKLDETIRNKLRKVREKLGLTRKDVEKLCGVKEIYIVKIETGKLESIEEERLKKLCSLYGINFEEIIYRDNLHYTNPVKFPKTPTPELMQIIGYIIGDGHFPSNRMLRLKDERKEVLEEYNQLFKTVFNLEGNIKKGDGNYYILEINSKYLIDWFRENIPELFNKTGNERTPEFVFRLNNDLVASYLRGIFDAEGYIRAEAKQIGIGMTSKCFIKEIQFLLLRFGILASYSKIKRKEENWNNTHKLLISDKKSFELFKKYIGFTAKDKMEKLEAILNKMKGLNFRYISIPLTKKEIREFVGVPLKTIKNGDNYCTDYTIEKIIEELNSKGLYDKAEYLKRFLDADIVWTKFKIEEVESDVEYVYDLEVEDYHNFIGNLIINHNSRWATHGNVCKENAHPHTDCKEEIAVVHNGIISNYKELKDELMKKGHKFKSETDTEVVPHLIEEELKKFKEINEENYIKAVKNAIKKLKGTYALVIINKNFPNLLIGARNESPLILGINDDGYFLGSDITAFLDYTNKAIPLEDGDVVVIKKKENGYEVTIENNGNTVEREMMEINWDISSAEKMGYPHFMLKEIMEQPEVLKVSAKISAEEIKELAKCIKDYDRVYFVAMGTSLHAAMVVEYLFAKLGKLVIACDASEFLNKGVVDDKTLVIGITQSGETYDTLKALRFAKKNKAKTGAIVNVLGSTATREADITVMMGAGIEIAVCATKTYTSQLMILYRLFIEYGKLLGRDMSEYEKEIDKIPNYIKEVLDKKETIKEIANNLKVNNYIFISKGINIASALEGALKFKEITYLHAEGMSGGLLKHGTISLIDENMDTVAIVPPRDSAVFNSILSNIEEVKARGGKVIAITPTEIDGAENILVPEVIEEISPIVYAPAFQLLAYYKAVELGRDVDKPRGLAKSVTVE.

C2 functions as the Nucleophile; for GATase activity in the catalytic mechanism. Positions 2 to 71 (CGIIGYIGND…DIDGNIGIGH (70 aa)) constitute a Glutamine amidotransferase type-2; first part domain. In terms of domain architecture, HTH cro/C1-type spans 198–253 (LRKVREKLGLTRKDVEKLCGVKEIYIVKIETGKLESIEEERLKKLCSLYGINFEEI). Residues 278–413 (IIGYIIGDGH…IQFLLLRFGI (136 aa)) form the DOD-type homing endonuclease domain. The Glutamine amidotransferase type-2; second part domain occupies 571-723 (SRWATHGNVC…DGDVVVIKKK (153 aa)). SIS domains follow at residues 786 to 923 (LAKC…LLGR) and 948 to 1089 (TIKE…VDKP). The active-site For Fru-6P isomerization activity is the K1094.

The protein in the C-terminal section; belongs to the SIS family. GFAT subfamily. As to quaternary structure, homodimer. Post-translationally, this protein undergoes a protein self splicing that involves a post-translational excision of the intervening region (intein) followed by peptide ligation.

It is found in the cytoplasm. It catalyses the reaction D-fructose 6-phosphate + L-glutamine = D-glucosamine 6-phosphate + L-glutamate. Functionally, catalyzes the first step in hexosamine metabolism, converting fructose-6P into glucosamine-6P using glutamine as a nitrogen source. This Methanocaldococcus jannaschii (strain ATCC 43067 / DSM 2661 / JAL-1 / JCM 10045 / NBRC 100440) (Methanococcus jannaschii) protein is Glutamine--fructose-6-phosphate aminotransferase [isomerizing] (glmS).